Here is a 264-residue protein sequence, read N- to C-terminus: Phosphonates import ATP-binding protein PhnC (264 aa).

The ABC transporter domain maps to 3–246 (IRLQEAGLRH…MLDALYANEQ (244 aa)). An ATP-binding site is contributed by 35-42 (GPSGAGKS).

The protein belongs to the ABC transporter superfamily. Phosphonates importer (TC 3.A.1.9.1) family. As to quaternary structure, the complex is composed of two ATP-binding proteins (PhnC), two transmembrane proteins (PhnE) and a solute-binding protein (PhnD).

Its subcellular location is the cell inner membrane. The enzyme catalyses phosphonate(out) + ATP + H2O = phosphonate(in) + ADP + phosphate + H(+). In terms of biological role, part of the ABC transporter complex PhnCDE involved in phosphonates import. Responsible for energy coupling to the transport system. This is Phosphonates import ATP-binding protein PhnC from Pseudomonas entomophila (strain L48).